The chain runs to 775 residues: Polyribonucleotide nucleotidyltransferase (775 aa).

The tract at residues aspartate 223–aspartate 247 is disordered. The segment covering arginine 231 to arginine 243 has biased composition (basic residues). Positions 567 and 573 each coordinate Mg(2+). The KH domain maps to proline 633–isoleucine 692. The S1 motif domain maps to glycine 704 to valine 773.

It belongs to the polyribonucleotide nucleotidyltransferase family. Requires Mg(2+) as cofactor.

It localises to the cytoplasm. It catalyses the reaction RNA(n+1) + phosphate = RNA(n) + a ribonucleoside 5'-diphosphate. Its function is as follows. Involved in mRNA degradation. Catalyzes the phosphorolysis of single-stranded polyribonucleotides processively in the 3'- to 5'-direction. The sequence is that of Polyribonucleotide nucleotidyltransferase from Corynebacterium kroppenstedtii (strain DSM 44385 / JCM 11950 / CIP 105744 / CCUG 35717).